The sequence spans 634 residues: Growth hormone receptor (634 aa).

The first 18 residues, 1 to 18 (MDLWQLLLTLAVAGSSDA), serve as a signal peptide directing secretion. Topologically, residues 19-260 (FSGSEATPAF…NPSACEEDFQ (242 aa)) are extracellular. Asparagine 46 is a glycosylation site (N-linked (GlcNAc...) asparagine). Cysteines 56 and 66 form a disulfide. A glycan (N-linked (GlcNAc...) asparagine) is linked at asparagine 73. Cysteines 97 and 108 form a disulfide. Asparagine 111 carries N-linked (GlcNAc...) asparagine glycosylation. Cysteine 122 and cysteine 136 are joined by a disulfide. One can recognise a Fibronectin type-III domain in the interval 147–250 (PPVGLNWTLL…EVLLITFPQM (104 aa)). N-linked (GlcNAc...) asparagine glycosylation is found at asparagine 152, asparagine 157, and asparagine 196. A WSXWS motif motif is present at residues 236–240 (YGKFS). A helical transmembrane segment spans residues 261–284 (FPWFLIIIFGILGLAVTLYLLIFS). Residues 285–634 (KQQRIKMLIL…STDQLNKIMP (350 aa)) lie on the Cytoplasmic side of the membrane. Positions 290–375 (KMLILPPVPV…HEKSLNIFGA (86 aa)) are required for JAK2 binding. The short motif at 293–301 (ILPPVPVPK) is the Box 1 motif element. Positions 336–345 (DSWVEFIELD) match the UbE motif motif. At serine 337 the chain carries Phosphoserine.

Belongs to the type I cytokine receptor family. Type 1 subfamily. In terms of assembly, on growth hormone (GH) binding, forms homodimers and binds JAK2 via a box 1-containing domain. In terms of processing, the soluble form (GHBP) is produced by phorbol ester-promoted proteolytic cleavage at the cell surface (shedding) by ADAM17/TACE. Shedding is inhibited by growth hormone (GH) binding to the receptor probably due to a conformational change in GHR rendering the receptor inaccessible to ADAM17. Post-translationally, on GH binding, phosphorylated on tyrosine residues in the cytoplasmic domain by JAK2. Ubiquitinated by the ECS(SOCS2) complex following ligand-binding and phosphorylation by JAK2, leading to its degradation by the proteasome. Regulation by the ECS(SOCS2) complex acts as a negative feedback loop of growth hormone receptor signaling. Ubiquitination is not sufficient for GHR internalization.

Its subcellular location is the cell membrane. The protein resides in the secreted. In terms of biological role, receptor for pituitary gland growth hormone (GH1) involved in regulating postnatal body growth. On ligand binding, couples to the JAK2/STAT5 pathway. Its function is as follows. The soluble form (GHBP) acts as a reservoir of growth hormone in plasma and may be a modulator/inhibitor of GH signaling. In Bos taurus (Bovine), this protein is Growth hormone receptor (GHR).